The primary structure comprises 469 residues: Citrate synthase, mitochondrial (469 aa).

Residues 1 to 30 constitute a mitochondrion transit peptide; it reads MSFLTVSRLAPKLLNSKNATYFLVAARNAS. Active-site residues include H304 and H350. Oxaloacetate is bound at residue R359. D405 is a catalytic residue. The oxaloacetate site is built by R431 and R451.

The protein belongs to the citrate synthase family. Homodimer.

Its subcellular location is the mitochondrion matrix. It catalyses the reaction oxaloacetate + acetyl-CoA + H2O = citrate + CoA + H(+). The protein operates within carbohydrate metabolism; tricarboxylic acid cycle; isocitrate from oxaloacetate: step 1/2. Its function is as follows. Key enzyme of the Krebs tricarboxylic acid cycle which catalyzes the synthesis of citrate from acetyl coenzyme A and oxaloacetate. The protein is Citrate synthase, mitochondrial (cs) of Kajikia audax (Striped marlin).